The primary structure comprises 323 residues: Fructose-1,6-bisphosphatase class 1 (323 aa).

Positions 88, 107, 109, and 110 each coordinate Mg(2+). Residues 110–113 (DGSS) and asparagine 200 contribute to the substrate site. Glutamate 272 contributes to the Mg(2+) binding site.

It belongs to the FBPase class 1 family. Homotetramer. The cofactor is Mg(2+).

Its subcellular location is the cytoplasm. The catalysed reaction is beta-D-fructose 1,6-bisphosphate + H2O = beta-D-fructose 6-phosphate + phosphate. The protein operates within carbohydrate biosynthesis; gluconeogenesis. In Acinetobacter baumannii (strain AYE), this protein is Fructose-1,6-bisphosphatase class 1.